The primary structure comprises 421 residues: Caspase-12 (421 aa).

Positions 1–92 (MADKKPSKED…QLSLEYQHES (92 aa)) constitute a CARD domain. Position 85 is a phosphoserine (Ser-85). Residues 88–131 (YQHESEDQESEESSASSSSSTESEEENEESKDEERAASAHSMAV) form a disordered region. Over residues 109 to 118 (ESEEENEESK) the composition is skewed to acidic residues. Active-site residues include His-252 and Cys-300.

Belongs to the peptidase C14A family. Heterotetramer that consists of two anti-parallel arranged heterodimers, each one formed by two subunits (Potential). May interact with TRAF2.

Its function is as follows. Involved in the activation cascade of caspases responsible for apoptosis execution. This is Caspase-12 from Macaca mulatta (Rhesus macaque).